We begin with the raw amino-acid sequence, 427 residues long: Trigger factor (427 aa).

The 86-residue stretch at 163-248 (GDTVILDFEG…LHEIKTKEVP (86 aa)) folds into the PPIase FKBP-type domain.

It belongs to the FKBP-type PPIase family. Tig subfamily.

It localises to the cytoplasm. The enzyme catalyses [protein]-peptidylproline (omega=180) = [protein]-peptidylproline (omega=0). Functionally, involved in protein export. Acts as a chaperone by maintaining the newly synthesized protein in an open conformation. Functions as a peptidyl-prolyl cis-trans isomerase. The protein is Trigger factor of Listeria innocua serovar 6a (strain ATCC BAA-680 / CLIP 11262).